A 366-amino-acid polypeptide reads, in one-letter code: Galactoside alpha-(1,2)-fucosyltransferase 1 (366 aa).

The Cytoplasmic segment spans residues 1-8; the sequence is MWPLSHRH. Residues 9–25 traverse the membrane as a helical; Signal-anchor for type II membrane protein segment; sequence LCLAFLLVCVLSAISFF. Over 26–366 the chain is Lumenal; sequence LHIHQDSFPH…LSPLWTLAEP (341 aa). 3 N-linked (GlcNAc...) asparagine glycosylation sites follow: Asn-66, Asn-302, and Asn-328.

The protein belongs to the glycosyltransferase 11 family.

It is found in the golgi apparatus. The protein resides in the golgi stack membrane. The enzyme catalyses a beta-D-galactosyl-(1-&gt;4)-N-acetyl-beta-D-glucosaminyl derivative + GDP-beta-L-fucose = an alpha-L-Fuc-(1-&gt;2)-beta-D-Gal-(1-&gt;4)-beta-D-GlcNAc derivative + GDP + H(+). It catalyses the reaction a ganglioside GA1 + GDP-beta-L-fucose = a ganglioside Fuc-GA1 + GDP + H(+). The catalysed reaction is a beta-D-Gal-(1-&gt;3)-beta-D-GlcNAc-(1-&gt;3)-beta-D-Gal-(1-&gt;4)-beta-D-Glc-(1&lt;-&gt;1')-Cer(d18:1(4E)) + GDP-beta-L-fucose = alpha-L-fucosyl-(1-&gt;2)- beta-D-galactosyl-(1-&gt;3)-N-acetyl-beta-D-glucosaminyl-(1-&gt;3)-beta-D-galactosyl-(1-&gt;4)-beta-D-glucosyl-(1&lt;-&gt;1')-N-acylsphing-4-enine + GDP + H(+). It carries out the reaction a neolactoside nLc4Cer(d18:1(4E)) + GDP-beta-L-fucose = a neolactoside IV(2)-alpha-Fuc-nLc4Cer(d18:1(4E)) + GDP + H(+). The enzyme catalyses a ganglioside GM1 + GDP-beta-L-fucose = a ganglioside Fuc-GM1 + GDP + H(+). It catalyses the reaction beta-D-galactosyl-(1-&gt;3)-N-acetyl-D-galactosamine + GDP-beta-L-fucose = alpha-L-fucosyl-(1-&gt;2)-beta-D-galactosyl-(1-&gt;3)-N-acetyl-D-galactosamine + GDP + H(+). The protein operates within protein modification; protein glycosylation. Its function is as follows. Catalyzes the transfer of L-fucose, from a guanosine diphosphate-beta-L-fucose, to the terminal galactose residue of glycoconjugates through an alpha(1,2) linkage leading to H antigen synthesis that is an intermediate substrate in the synthesis of ABO blood group antigens. H antigen is essential for maturation of the glomerular layer of the main olfactory bulb, in cell migration and early cell-cell contacts during tumor associated angiogenesis. Preferentially fucosylates soluble lactose and to a lesser extent fucosylates glycolipids gangliosides GA1 and GM1a. The protein is Galactoside alpha-(1,2)-fucosyltransferase 1 of Lagothrix lagotricha (Brown woolly monkey).